An 865-amino-acid chain; its full sequence is Alanine--tRNA ligase (865 aa).

Zn(2+)-binding residues include His-554, His-558, Cys-656, and His-660.

It belongs to the class-II aminoacyl-tRNA synthetase family. Requires Zn(2+) as cofactor.

The protein resides in the cytoplasm. The enzyme catalyses tRNA(Ala) + L-alanine + ATP = L-alanyl-tRNA(Ala) + AMP + diphosphate. Catalyzes the attachment of alanine to tRNA(Ala) in a two-step reaction: alanine is first activated by ATP to form Ala-AMP and then transferred to the acceptor end of tRNA(Ala). Also edits incorrectly charged Ser-tRNA(Ala) and Gly-tRNA(Ala) via its editing domain. This chain is Alanine--tRNA ligase, found in Idiomarina loihiensis (strain ATCC BAA-735 / DSM 15497 / L2-TR).